The following is a 429-amino-acid chain: Enolase (429 aa).

Residue Gln-162 coordinates (2R)-2-phosphoglycerate. Glu-204 functions as the Proton donor in the catalytic mechanism. Mg(2+) contacts are provided by Asp-242, Glu-289, and Asp-316. The (2R)-2-phosphoglycerate site is built by Lys-341, Arg-370, Ser-371, and Lys-392. Lys-341 acts as the Proton acceptor in catalysis.

Belongs to the enolase family. It depends on Mg(2+) as a cofactor.

It localises to the cytoplasm. The protein resides in the secreted. The protein localises to the cell surface. The catalysed reaction is (2R)-2-phosphoglycerate = phosphoenolpyruvate + H2O. The protein operates within carbohydrate degradation; glycolysis; pyruvate from D-glyceraldehyde 3-phosphate: step 4/5. In terms of biological role, catalyzes the reversible conversion of 2-phosphoglycerate (2-PG) into phosphoenolpyruvate (PEP). It is essential for the degradation of carbohydrates via glycolysis. The protein is Enolase of Flavobacterium psychrophilum (strain ATCC 49511 / DSM 21280 / CIP 103535 / JIP02/86).